We begin with the raw amino-acid sequence, 700 residues long: Elongation factor G (700 aa).

Residues Glu8 to Val290 enclose the tr-type G domain. GTP contacts are provided by residues Ala17–Thr24, Asp88–His92, and Asn142–Asp145.

Belongs to the TRAFAC class translation factor GTPase superfamily. Classic translation factor GTPase family. EF-G/EF-2 subfamily.

The protein resides in the cytoplasm. In terms of biological role, catalyzes the GTP-dependent ribosomal translocation step during translation elongation. During this step, the ribosome changes from the pre-translocational (PRE) to the post-translocational (POST) state as the newly formed A-site-bound peptidyl-tRNA and P-site-bound deacylated tRNA move to the P and E sites, respectively. Catalyzes the coordinated movement of the two tRNA molecules, the mRNA and conformational changes in the ribosome. This is Elongation factor G from Paracidovorax citrulli (strain AAC00-1) (Acidovorax citrulli).